A 278-amino-acid chain; its full sequence is Indole-3-glycerol phosphate synthase (278 aa).

It belongs to the TrpC family.

The enzyme catalyses 1-(2-carboxyphenylamino)-1-deoxy-D-ribulose 5-phosphate + H(+) = (1S,2R)-1-C-(indol-3-yl)glycerol 3-phosphate + CO2 + H2O. It participates in amino-acid biosynthesis; L-tryptophan biosynthesis; L-tryptophan from chorismate: step 4/5. This is Indole-3-glycerol phosphate synthase from Pseudomonas fluorescens (strain ATCC BAA-477 / NRRL B-23932 / Pf-5).